An 88-amino-acid polypeptide reads, in one-letter code: Small ribosomal subunit protein uS15 (88 aa).

It belongs to the universal ribosomal protein uS15 family. In terms of assembly, part of the 30S ribosomal subunit. Forms a bridge to the 50S subunit in the 70S ribosome, contacting the 23S rRNA.

One of the primary rRNA binding proteins, it binds directly to 16S rRNA where it helps nucleate assembly of the platform of the 30S subunit by binding and bridging several RNA helices of the 16S rRNA. Its function is as follows. Forms an intersubunit bridge (bridge B4) with the 23S rRNA of the 50S subunit in the ribosome. The sequence is that of Small ribosomal subunit protein uS15 from Leptospira borgpetersenii serovar Hardjo-bovis (strain JB197).